A 34-amino-acid chain; its full sequence is KEGYPTNSEGCKITXLFNDPYCKGXCINLSTQAD.

An LCN-type CS-alpha/beta domain is found at 1 to 34 (KEGYPTNSEGCKITXLFNDPYCKGXCINLSTQAD).

In terms of tissue distribution, expressed by the venom gland.

It localises to the secreted. Does not cause symptoms of intoxication, paralysis or death in insects (A.domestica). This chain is Non-toxic venom protein, found in Rhopalurus junceus (Caribbean blue scorpion).